The primary structure comprises 142 residues: Large ribosomal subunit protein uL16 (142 aa).

It belongs to the universal ribosomal protein uL16 family. As to quaternary structure, part of the 50S ribosomal subunit.

Functionally, binds 23S rRNA and is also seen to make contacts with the A and possibly P site tRNAs. The chain is Large ribosomal subunit protein uL16 from Thermosipho africanus (strain TCF52B).